A 991-amino-acid polypeptide reads, in one-letter code: MKNLNKFVSIALCSSLLGGMAFAQQTELGRNPNVRLLESTQQSVTKVQFRMDNLKFTEVQTPKGMAQVPTYTEGVNLSEKGMPTLPILSRSLAVSDTREMKVEVVSSKFIEKKNVLIAPSKGMIMRNEDPKKIPYVYGKSYSQNKFFPGEIATLDDPFILRDVRGQVVNFAPLQYNPVTKTLRIYTEITVAVSETSEQGKNILNKKGTFAGFEDTYKRMFMNYEPGRYTPVEEKQNGRMIVIVAKKYEGDIKDFVDWKNQRGLRTEVKVAEDIASPVTANAIQQFVKQEYEKEGNDLTYVLLVGDHKDIPAKITPGIKSDQVYGQIVGNDHYNEVFIGRFSCESKEDLKTQIDRTIHYERNITTEDKWLGQALCIASAEGGPSADNGESDIQHENVIANLLTQYGYTKIIKCYDPGVTPKNIIDAFNGGISLVNYTGHGSETAWGTSHFGTTHVKQLTNSNQLPFIFDVACVNGDFLFSMPCFAEALMRAQKDGKPTGTVAIIASTINQSWASPMRGQDEMNEILCEKHPNNIKRTFGGVTMNGMFAMVEKYKKDGEKMLDTWTVFGDPSLLVRTLVPTKMQVTAPAQINLTDASVNVSCDYNGAIATISANGKMFGSAVVENGTATINLTGLTNESTLTLTVVGYNKETVIKTINTNGEPNPYQPVSNLTATTQGQKVTLKWDAPSTKTNATTNTARSVDGIRELVLLSVSDAPELLRSGQAEIVLEAHDVWNDGSGYQILLDADHDQYGQVIPSDTHTLWPNCSVPANLFAPFEYTVPENADPSCSPTNMIMDGTASVNIPAGTYDFAIAAPQANAKIWIAGQGPTKEDDYVFEAGKKYHFLMKKMGSGDGTELTISEGGGSDYTYTVYRDGTKIKEGLTETTYRDAGMSAQSHEYCVEVKYAAGVSPKVCVDYIPDGVADVTAQKPYTLTVVGKTITVTCQGEAMIYDMNGRRLAAGRNTVVYTAQGGYYAVMVVVDGKSYVEKLAVK.

An N-terminal signal peptide occupies residues 1–24 (MKNLNKFVSIALCSSLLGGMAFAQ). A propeptide spanning residues 25 to 227 (QTELGRNPNV…RMFMNYEPGR (203 aa)) is cleaved from the precursor. Ca(2+)-binding residues include aspartate 305, valine 327, aspartate 330, tyrosine 332, glutamate 334, glutamate 388, and histidine 393. Histidine 438 acts as the Proton donor in catalysis. Residue cysteine 471 is the Nucleophile of the active site. Residues phenylalanine 476, glutamate 485, aspartate 519, glutamate 520, glutamate 523, and histidine 529 each contribute to the Ca(2+) site.

This sequence belongs to the peptidase C25 family.

The protein resides in the secreted. It carries out the reaction Hydrolysis of proteins and small molecule substrates, with a preference for Arg in P1.. Requires cysteine for activation and Ca(2+) and/or Mg(2+) for stabilization. It is stimulated by glycine-containing dipeptides. It is resistant to inhibition by proteinase inhibitors in human plasma. In terms of biological role, thiol protease. Acts synergistically with RgpB to catalyze the maturation of fimbrial subunits, such as FimA. Its proteolytic activity is a major factor in both periodontal tissue destruction and in evasion of host defense mechanisms. The polypeptide is Gingipain R1 (rgpA) (Porphyromonas gingivalis (Bacteroides gingivalis)).